The primary structure comprises 756 residues: NUT family member 2F (756 aa).

4 disordered regions span residues 173–200, 293–438, 511–639, and 653–756; these read GNARPWPQGAHGEGSLAPSQAKARPDDS, IQKS…TSDP, RAAP…LPGM, and RLSQ…HCSQ. Pro residues predominate over residues 304–321; sequence SLPPPAPPRLEPRGPPAP. A compositionally biased stretch (basic and acidic residues) spans 417 to 427; sequence EGQREKGKVEQ. Residues 543 to 560 are compositionally biased toward polar residues; it reads QRVSVETSPPQTAAQDPQ. The segment covering 654-665 has biased composition (low complexity); sequence LSQSPVPSSGLL. Residues 746-756 show a composition bias toward basic residues; the sequence is SRRKKKRHCSQ.

Belongs to the NUT family.

The polypeptide is NUT family member 2F (NUTM2F) (Homo sapiens (Human)).